The sequence spans 210 residues: Uracil phosphoribosyltransferase (210 aa).

5-phospho-alpha-D-ribose 1-diphosphate is bound by residues R78, R103, and 130–138 (DPMLATGGS). Uracil is bound by residues I193 and 198–200 (GDA). 5-phospho-alpha-D-ribose 1-diphosphate is bound at residue D199.

This sequence belongs to the UPRTase family. It depends on Mg(2+) as a cofactor.

It catalyses the reaction UMP + diphosphate = 5-phospho-alpha-D-ribose 1-diphosphate + uracil. It participates in pyrimidine metabolism; UMP biosynthesis via salvage pathway; UMP from uracil: step 1/1. Its activity is regulated as follows. Allosterically activated by GTP. In terms of biological role, catalyzes the conversion of uracil and 5-phospho-alpha-D-ribose 1-diphosphate (PRPP) to UMP and diphosphate. In Laribacter hongkongensis (strain HLHK9), this protein is Uracil phosphoribosyltransferase.